The following is a 130-amino-acid chain: Glycine cleavage system H protein (130 aa).

Residues 24–106 enclose the Lipoyl-binding domain; the sequence is TVTIGITDHA…YDEGWFFKVK (83 aa). K65 bears the N6-lipoyllysine mark.

It belongs to the GcvH family. The glycine cleavage system is composed of four proteins: P, T, L and H. (R)-lipoate serves as cofactor.

Functionally, the glycine cleavage system catalyzes the degradation of glycine. The H protein shuttles the methylamine group of glycine from the P protein to the T protein. In Teredinibacter turnerae (strain ATCC 39867 / T7901), this protein is Glycine cleavage system H protein.